We begin with the raw amino-acid sequence, 609 residues long: Alpha-fetoprotein (609 aa).

Residues 1-18 form the signal peptide; it reads MKWVESIFLIFLLNFTES. Albumin domains are found at residues 19-210, 211-402, and 403-601; these read RTLH…ATVT, KELR…EELQ, and KYIQ…KLIS. A Cu(2+)-binding site is contributed by His22. 8 cysteine pairs are disulfide-bonded: Cys99–Cys114, Cys113–Cys124, Cys148–Cys193, Cys192–Cys201, Cys224–Cys270, Cys269–Cys277, Cys289–Cys303, and Cys302–Cys313. Ser111, Ser115, and Ser117 each carry phosphoserine; by FAM20C. N-linked (GlcNAc...) asparagine glycosylation occurs at Asn251. Ser344 bears the Phosphoserine; by FAM20C mark. 7 disulfide bridges follow: Cys384–Cys393, Cys416–Cys462, Cys461–Cys472, Cys485–Cys501, Cys500–Cys511, Cys538–Cys583, and Cys582–Cys591. Phosphoserine; by FAM20C occurs at positions 444 and 445.

Belongs to the ALB/AFP/VDB family. Dimeric and trimeric forms have been found in addition to the monomeric form. Independent studies suggest heterogeneity of the N-terminal sequence of the mature protein and of the cleavage site of the signal sequence. In terms of processing, sulfated. As to expression, plasma. Synthesized by the fetal liver and yolk sac.

The protein localises to the secreted. In terms of biological role, binds copper, nickel, and fatty acids as well as, and bilirubin less well than, serum albumin. Only a small percentage (less than 2%) of the human AFP shows estrogen-binding properties. In Homo sapiens (Human), this protein is Alpha-fetoprotein (AFP).